Here is a 1068-residue protein sequence, read N- to C-terminus: Carbamoyl phosphate synthase large chain (1068 aa).

Residues 1–401 (MPRNNDIKKV…ALMKAIRSLE (401 aa)) are carboxyphosphate synthetic domain. 12 residues coordinate ATP: Arg129, Arg169, Gly175, Gly176, Arg208, Ile210, Glu215, Gly241, Val242, His243, Gln284, and Glu298. Residues 133 to 327 (KDTMEKIGEP…IAKVTAKIAL (195 aa)) form the ATP-grasp 1 domain. Mg(2+) is bound by residues Gln284, Glu298, and Asn300. Mn(2+) contacts are provided by Gln284, Glu298, and Asn300. The oligomerization domain stretch occupies residues 402–546 (QHVDSLMSYD…YSVFGSENEA (145 aa)). The interval 547–930 (AETNPQKKVL…ALYKAFEGAG (384 aa)) is carbamoyl phosphate synthetic domain. The ATP-grasp 2 domain maps to 672-862 (DEILQKTGIP…IVDLAARIIM (191 aa)). Arg708, Lys747, Leu749, Glu753, Gly778, Val779, His780, Ser781, Gln821, and Glu833 together coordinate ATP. Gln821, Glu833, and Asn835 together coordinate Mg(2+). Mn(2+) contacts are provided by Gln821, Glu833, and Asn835. The MGS-like domain maps to 931–1068 (VELPKYKQMI…PVDIATVKNL (138 aa)). Positions 931–1068 (VELPKYKQMI…PVDIATVKNL (138 aa)) are allosteric domain.

The protein belongs to the CarB family. In terms of assembly, composed of two chains; the small (or glutamine) chain promotes the hydrolysis of glutamine to ammonia, which is used by the large (or ammonia) chain to synthesize carbamoyl phosphate. Tetramer of heterodimers (alpha,beta)4. Mg(2+) serves as cofactor. Requires Mn(2+) as cofactor.

It carries out the reaction hydrogencarbonate + L-glutamine + 2 ATP + H2O = carbamoyl phosphate + L-glutamate + 2 ADP + phosphate + 2 H(+). The enzyme catalyses hydrogencarbonate + NH4(+) + 2 ATP = carbamoyl phosphate + 2 ADP + phosphate + 2 H(+). It functions in the pathway amino-acid biosynthesis; L-arginine biosynthesis; carbamoyl phosphate from bicarbonate: step 1/1. The protein operates within pyrimidine metabolism; UMP biosynthesis via de novo pathway; (S)-dihydroorotate from bicarbonate: step 1/3. In terms of biological role, large subunit of the glutamine-dependent carbamoyl phosphate synthetase (CPSase). CPSase catalyzes the formation of carbamoyl phosphate from the ammonia moiety of glutamine, carbonate, and phosphate donated by ATP, constituting the first step of 2 biosynthetic pathways, one leading to arginine and/or urea and the other to pyrimidine nucleotides. The large subunit (synthetase) binds the substrates ammonia (free or transferred from glutamine from the small subunit), hydrogencarbonate and ATP and carries out an ATP-coupled ligase reaction, activating hydrogencarbonate by forming carboxy phosphate which reacts with ammonia to form carbamoyl phosphate. In Agathobacter rectalis (strain ATCC 33656 / DSM 3377 / JCM 17463 / KCTC 5835 / VPI 0990) (Eubacterium rectale), this protein is Carbamoyl phosphate synthase large chain.